Reading from the N-terminus, the 622-residue chain is WD repeat-containing protein 48 (622 aa).

Position 28 is a phosphotyrosine (Tyr28). WD repeat units lie at residues 28–67 (YNRNGVNALQLDPALNRLFTAGRDSIIRIWSVNQHKQDPY), 73–112 (HHTDWVNDIVLCCNGKTLISASSDTTVKVWNAHKGFCMST), 115–154 (THKDYVKALAYAKDKELVASAGLDRQIFLWDVNTLTALTA), 166–205 (GNKDSIYSLAMNQLGTIIVSGSTEKVLRVWDPRTCAKLMK), 208–247 (GHTDNVKALLLNRDGTQCLSGSSDGTIRLWSLGQQRCIAT), 250–289 (VHDEGVWALQVNDAFTHVYSGGRDRKIYCTDLRNPDIRVL), 292–334 (EEKA…NFRA), and 358–397 (KGGASIIQCHILNDKRHILTKDTNNNVAYWVSVKDAGFSS). Position 214 is an N6-acetyllysine (Lys214). At Lys523 the chain carries N6-acetyllysine. Residues 552 to 573 (LDNESQTTSSSNNEKPGEQEKE) are disordered. The segment covering 554-565 (NESQTTSSSNNE) has biased composition (low complexity). Thr558 bears the Phosphothreonine mark.

This sequence belongs to the WD repeat WDR48 family. As to quaternary structure, interacts with USP46. Interacts with USP1. Interacts with USP12. Component of the USP12-WDR20-WDR48 deubiquitinating complex. Component of the USP12-DMWD-WDR48 deubiquitinating complex. Interacts with PHLPP1. Interacts with RAD51AP1; the interaction is direct and promotes formation of a trimeric complex with RAD51 via RAD51AP1. Interacts with ATAD5; the interaction regulates USP1-mediated PCNA deubiquitination. Interacts with RAD51; the interaction is enhanced under replication stress. Interacts with ITCH; the interaction is more efficient when both USP12 and WDR48/UAF1 are involved and may facilitate recruitment of the USP12 deubiquitinating complex to Notch.

Its subcellular location is the nucleus. It is found in the cytoplasm. It localises to the lysosome. The protein resides in the late endosome. Regulator of deubiquitinating complexes, which acts as a strong activator of USP1, USP12 and USP46. Enhances the USP1-mediated deubiquitination of FANCD2; USP1 being almost inactive by itself. Activates deubiquitination by increasing the catalytic turnover without increasing the affinity of deubiquitinating enzymes for the substrate. Also activates deubiquitinating activity of complexes containing USP12. Docks at the distal end of the USP12 fingers domain and induces a cascade of structural changes leading to the activation of the enzyme. Together with RAD51AP1, promotes DNA repair by stimulating RAD51-mediated homologous recombination. Binds single-stranded DNA (ssDNA) and double-stranded DNA (dsDNA). DNA-binding is required both for USP1-mediated deubiquitination of FANCD2 and stimulation of RAD51-mediated homologous recombination: both WDR48/UAF1 and RAD51AP1 have coordinated role in DNA-binding during these processes. Together with ATAD5 and by regulating USP1 activity, has a role in PCNA-mediated translesion synthesis (TLS) by deubiquitinating monoubiquitinated PCNA. Together with ATAD5, has a role in recruiting RAD51 to stalled forks during replication stress. This Macaca fascicularis (Crab-eating macaque) protein is WD repeat-containing protein 48 (WDR48).